The following is a 230-amino-acid chain: Probable C4-dicarboxylate response regulator DctR (230 aa).

In terms of domain architecture, Response regulatory spans 8 to 124; that stretch reads RVLLIEDDPM…RLKAALTQYE (117 aa). Aspartate 59 carries the post-translational modification 4-aspartylphosphate. The H-T-H motif DNA-binding region spans 183–209; it reads EEIGRDVGLARVTVRRYLNYLESVGQV.

In terms of processing, phosphorylated by DctS.

It localises to the cytoplasm. Member of the two-component regulatory system DctS/DctR. Essential for expression of DctP. The chain is Probable C4-dicarboxylate response regulator DctR (dctR) from Halalkalibacterium halodurans (strain ATCC BAA-125 / DSM 18197 / FERM 7344 / JCM 9153 / C-125) (Bacillus halodurans).